We begin with the raw amino-acid sequence, 146 residues long: Hemoglobin subunit beta (146 aa).

Residues 2–146 (QWAAEEKQLI…VAHALARKYH (145 aa)) enclose the Globin domain. Heme b-binding residues include His-63 and His-92.

It belongs to the globin family. In terms of assembly, heterotetramer of two alpha chains and two beta chains. As to expression, red blood cells.

Its function is as follows. Involved in oxygen transport from the lung to the various peripheral tissues. The chain is Hemoglobin subunit beta (HBB) from Accipiter gentilis (Northern goshawk).